Here is a 501-residue protein sequence, read N- to C-terminus: Armadillo repeat-containing protein 6 (501 aa).

The residue at position 64 (S64) is a Phosphoserine. ARM repeat units follow at residues 220–264, 274–318, 319–369, and 370–412; these read GVLP…HAHN, KGLK…DLGG, LSIL…RAGG, and TESI…VEGG. H263 is modified (pros-methylhistidine).

The protein belongs to the ARMC6 family. Post-translationally, methylated at His-263 by METTL9.

In Pongo abelii (Sumatran orangutan), this protein is Armadillo repeat-containing protein 6 (ARMC6).